A 103-amino-acid chain; its full sequence is Nucleoid-associated protein Adeh_3636 (103 aa).

It belongs to the YbaB/EbfC family. As to quaternary structure, homodimer.

It is found in the cytoplasm. It localises to the nucleoid. Functionally, binds to DNA and alters its conformation. May be involved in regulation of gene expression, nucleoid organization and DNA protection. The protein is Nucleoid-associated protein Adeh_3636 of Anaeromyxobacter dehalogenans (strain 2CP-C).